The primary structure comprises 253 residues: Eukaryotic initiation factor 4A-6 (253 aa).

Positions 1-82 (HVVVGTPGRV…RKFMNKPVRI (82 aa)) constitute a Helicase ATP-binding domain. Positions 30–33 (DEAD) match the DEAD box motif. The Helicase C-terminal domain maps to 93 to 253 (GIKQFYVNVD…EELPANVADL (161 aa)).

The protein belongs to the DEAD box helicase family. eIF4A subfamily. EIF4F is a multi-subunit complex, the composition of which varies with external and internal environmental conditions. It is composed of at least EIF4A, EIF4E and EIF4G.

It catalyses the reaction ATP + H2O = ADP + phosphate + H(+). Functionally, ATP-dependent RNA helicase which is a subunit of the eIF4F complex involved in cap recognition and is required for mRNA binding to ribosome. In the current model of translation initiation, eIF4A unwinds RNA secondary structures in the 5'-UTR of mRNAs which is necessary to allow efficient binding of the small ribosomal subunit, and subsequent scanning for the initiator codon. This chain is Eukaryotic initiation factor 4A-6, found in Nicotiana tabacum (Common tobacco).